Reading from the N-terminus, the 373-residue chain is Transaldolase (373 aa).

Catalysis depends on K143, which acts as the Schiff-base intermediate with substrate.

It belongs to the transaldolase family. Type 2 subfamily.

It localises to the cytoplasm. The catalysed reaction is D-sedoheptulose 7-phosphate + D-glyceraldehyde 3-phosphate = D-erythrose 4-phosphate + beta-D-fructose 6-phosphate. Its pathway is carbohydrate degradation; pentose phosphate pathway; D-glyceraldehyde 3-phosphate and beta-D-fructose 6-phosphate from D-ribose 5-phosphate and D-xylulose 5-phosphate (non-oxidative stage): step 2/3. Transaldolase is important for the balance of metabolites in the pentose-phosphate pathway. The chain is Transaldolase (tal) from Mycobacterium bovis (strain ATCC BAA-935 / AF2122/97).